Reading from the N-terminus, the 604-residue chain is Linalool synthase Tps-5042L13, chloroplastic (604 aa).

The transit peptide at 1-34 (MSSMRIYVAIMKKPSVKHVDNVDKKASKPSWRVS) directs the protein to the chloroplast. (2E)-geranyl diphosphate-binding residues include R323, D360, D364, R501, and D504. Mg(2+)-binding residues include D360 and D364. The DDXXD motif signature appears at 360 to 364 (DDVYD). Residues D504, T508, and E512 each coordinate Mg(2+).

It belongs to the terpene synthase family. Tpsb subfamily. Monomer. Mg(2+) is required as a cofactor. Mn(2+) serves as cofactor.

The protein resides in the plastid. It is found in the chloroplast. It carries out the reaction (2E)-geranyl diphosphate + H2O = linalool + diphosphate. It functions in the pathway secondary metabolite biosynthesis; terpenoid biosynthesis. In terms of biological role, monoterpene synthase (mono-TPS) involved in the biosynthesis of monoterpenes natural products. Catalyzes the conversion of (2E)-geranyl diphosphate (GPP) into linalool. This Perilla frutescens (Beefsteak mint) protein is Linalool synthase Tps-5042L13, chloroplastic.